We begin with the raw amino-acid sequence, 110 residues long: MSASELATSYSALILADEGIEITSDKLLSLTKAANVDVEPIWATIFAKALEGKDLKELLLNIGSAAAAPAAGGAGAPAAAAGGEAAAEEQKEEAKEEEESDEDMGFGLFD.

Residues 69-85 (PAAGGAGAPAAAAGGEA) are compositionally biased toward low complexity. The segment at 69 to 110 (PAAGGAGAPAAAAGGEAAAEEQKEEAKEEEESDEDMGFGLFD) is disordered. Acidic residues predominate over residues 95–104 (KEEEESDEDM).

This sequence belongs to the eukaryotic ribosomal protein P1/P2 family. In terms of assembly, component of the large ribosomal subunit (LSU). Mature yeast ribosomes consist of a small (40S) and a large (60S) subunit. The 40S small subunit contains 1 molecule of ribosomal RNA (18S rRNA) and at least 33 different proteins. The large 60S subunit contains 3 rRNA molecules (25S, 5.8S and 5S rRNA) and at least 46 different proteins. The acidic ribosomal P-proteins form the stalk structure of the 60S subunit. They are organized as a pentameric complex in which uL10/P0 interacts with 2 heterodimers of P1 and P2 proteins.

It localises to the cytoplasm. Component of the ribosome, a large ribonucleoprotein complex responsible for the synthesis of proteins in the cell. The small ribosomal subunit (SSU) binds messenger RNAs (mRNAs) and translates the encoded message by selecting cognate aminoacyl-transfer RNA (tRNA) molecules. The large subunit (LSU) contains the ribosomal catalytic site termed the peptidyl transferase center (PTC), which catalyzes the formation of peptide bonds, thereby polymerizing the amino acids delivered by tRNAs into a polypeptide chain. The nascent polypeptides leave the ribosome through a tunnel in the LSU and interact with protein factors that function in enzymatic processing, targeting, and the membrane insertion of nascent chains at the exit of the ribosomal tunnel. The chain is Large ribosomal subunit protein P1B (rpp102) from Schizosaccharomyces pombe (strain 972 / ATCC 24843) (Fission yeast).